The sequence spans 739 residues: Ent-kaurene synthase-like 3 (739 aa).

Residues aspartate 475, aspartate 479, asparagine 619, threonine 623, and glutamate 627 each contribute to the Mg(2+) site. The DDXXD motif motif lies at aspartate 475–aspartate 479.

It belongs to the terpene synthase family. Mg(2+) is required as a cofactor. As to expression, expressed in roots and stems.

The polypeptide is Ent-kaurene synthase-like 3 (KSL3) (Oryza sativa subsp. japonica (Rice)).